Reading from the N-terminus, the 270-residue chain is Urease accessory protein UreD (270 aa).

The protein belongs to the UreD family. UreD, UreF and UreG form a complex that acts as a GTP-hydrolysis-dependent molecular chaperone, activating the urease apoprotein by helping to assemble the nickel containing metallocenter of UreC. The complex may form in the order UreABCD, UreABCDF, UreABCDFG. The UreE protein probably delivers the nickel in a GTPase-dependent fashion.

The protein localises to the cytoplasm. Functionally, necessary for the functional incorporation of the urease nickel metallocenter. This Klebsiella aerogenes (Enterobacter aerogenes) protein is Urease accessory protein UreD.